The chain runs to 406 residues: Tryptophan synthase beta chain (406 aa).

Residue Lys95 is modified to N6-(pyridoxal phosphate)lysine.

The protein belongs to the TrpB family. In terms of assembly, tetramer of two alpha and two beta chains. The cofactor is pyridoxal 5'-phosphate.

It carries out the reaction (1S,2R)-1-C-(indol-3-yl)glycerol 3-phosphate + L-serine = D-glyceraldehyde 3-phosphate + L-tryptophan + H2O. It participates in amino-acid biosynthesis; L-tryptophan biosynthesis; L-tryptophan from chorismate: step 5/5. Its function is as follows. The beta subunit is responsible for the synthesis of L-tryptophan from indole and L-serine. The protein is Tryptophan synthase beta chain of Pseudomonas fluorescens (strain ATCC BAA-477 / NRRL B-23932 / Pf-5).